Consider the following 364-residue polypeptide: Pre-small/secreted glycoprotein (364 aa).

An N-terminal signal peptide occupies residues 1–32; the sequence is MGVTGILQLPRDRFKRTSFFLWVIILFQRTFS. A glycan (N-linked (GlcNAc...) asparagine; by host) is linked at Asn40. Intrachain disulfides connect Cys108/Cys135 and Cys121/Cys147. Residues Asn204, Asn228, Asn238, Asn257, and Asn268 are each glycosylated (N-linked (GlcNAc...) asparagine; by host).

It belongs to the filoviruses glycoprotein family. Homodimer; disulfide-linked. The homodimers are linked by two disulfide bonds in a parallel orientation. In terms of assembly, monomer. This precursor is processed into mature sGP and delta-peptide by host furin or furin-like proteases. The cleavage site corresponds to the furin optimal cleavage sequence [KR]-X-[KR]-R. In terms of processing, N-glycosylated. Post-translationally, O-glycosylated.

The protein localises to the secreted. Its function is as follows. Seems to possess an anti-inflammatory activity as it can reverse the barrier-decreasing effects of TNF alpha. Might therefore contribute to the lack of inflammatory reaction seen during infection in spite the of extensive necrosis and massive virus production. Does not seem to be involved in activation of primary macrophages. Does not seem to interact specifically with neutrophils. Functionally, viroporin that permeabilizes mammalian cell plasma membranes. It acts by altering permeation of ionic compounds and small molecules. This activity may lead to viral enterotoxic activity. This Epomops franqueti (Franquet's epauletted fruit bat) protein is Pre-small/secreted glycoprotein (GP).